The chain runs to 658 residues: tRNA uridine 5-carboxymethylaminomethyl modification enzyme MnmG (658 aa).

13–18 (GAGHAG) provides a ligand contact to FAD. 285–299 (GPRYCPSVEDKINRF) is a binding site for NAD(+).

The protein belongs to the MnmG family. In terms of assembly, homodimer. Heterotetramer of two MnmE and two MnmG subunits. The cofactor is FAD.

It localises to the cytoplasm. In terms of biological role, NAD-binding protein involved in the addition of a carboxymethylaminomethyl (cmnm) group at the wobble position (U34) of certain tRNAs, forming tRNA-cmnm(5)s(2)U34. This chain is tRNA uridine 5-carboxymethylaminomethyl modification enzyme MnmG, found in Verminephrobacter eiseniae (strain EF01-2).